A 1377-amino-acid chain; its full sequence is ATP-dependent helicase/nuclease subunit A (1377 aa).

Positions 4 to 478 constitute a UvrD-like helicase ATP-binding domain; the sequence is TSWTPGQQKV…IDLSKNFRSR (475 aa). Residue 25 to 32 coordinates ATP; sequence AAAGSGKT. A UvrD-like helicase C-terminal domain is found at 526 to 867; that stretch reads FLFSDTKTEL…RIMSIHKSKG (342 aa). The span at 1036–1065 shows a compositional bias: acidic residues; it reads FEEESDEQSDEERSDEERSDGEQSDGEQSD. A disordered region spans residues 1036-1072; it reads FEEESDEQSDEERSDEERSDGEQSDGEQSDGEQPRKD.

Belongs to the helicase family. AddA subfamily. As to quaternary structure, heterodimer of AddA and AddB/RexB. The cofactor is Mg(2+).

The enzyme catalyses Couples ATP hydrolysis with the unwinding of duplex DNA by translocating in the 3'-5' direction.. The catalysed reaction is ATP + H2O = ADP + phosphate + H(+). The heterodimer acts as both an ATP-dependent DNA helicase and an ATP-dependent, dual-direction single-stranded exonuclease. Recognizes the chi site generating a DNA molecule suitable for the initiation of homologous recombination. The AddA nuclease domain is required for chi fragment generation; this subunit has the helicase and 3' -&gt; 5' nuclease activities. The polypeptide is ATP-dependent helicase/nuclease subunit A (Lachnoclostridium phytofermentans (strain ATCC 700394 / DSM 18823 / ISDg) (Clostridium phytofermentans)).